Consider the following 227-residue polypeptide: Large ribosomal subunit protein uL3 (227 aa).

Residue Gln-154 is modified to N5-methylglutamine.

The protein belongs to the universal ribosomal protein uL3 family. Part of the 50S ribosomal subunit. Forms a cluster with proteins L14 and L19. Post-translationally, methylated by PrmB.

In terms of biological role, one of the primary rRNA binding proteins, it binds directly near the 3'-end of the 23S rRNA, where it nucleates assembly of the 50S subunit. This chain is Large ribosomal subunit protein uL3, found in Acidiphilium cryptum (strain JF-5).